Consider the following 251-residue polypeptide: Methionine aminopeptidase (251 aa).

H77 is a binding site for substrate. Positions 94, 105, and 169 each coordinate a divalent metal cation. A substrate-binding site is contributed by H176. A divalent metal cation contacts are provided by E202 and E233.

The protein belongs to the peptidase M24A family. Methionine aminopeptidase type 1 subfamily. In terms of assembly, monomer. Co(2+) is required as a cofactor. Requires Zn(2+) as cofactor. It depends on Mn(2+) as a cofactor. Fe(2+) serves as cofactor.

It carries out the reaction Release of N-terminal amino acids, preferentially methionine, from peptides and arylamides.. In terms of biological role, removes the N-terminal methionine from nascent proteins. The N-terminal methionine is often cleaved when the second residue in the primary sequence is small and uncharged (Met-Ala-, Cys, Gly, Pro, Ser, Thr, or Val). Requires deformylation of the N(alpha)-formylated initiator methionine before it can be hydrolyzed. This is Methionine aminopeptidase from Mycoplasma capricolum subsp. capricolum (strain California kid / ATCC 27343 / NCTC 10154).